The primary structure comprises 282 residues: Aldo-keto reductase BQ2027_MB2996 (282 aa).

Tyr57 acts as the Proton donor in catalysis. 9 residues coordinate NADPH: Leu197, Val235, Arg237, Ser238, Ala239, Arg243, Ser246, Asn247, and Arg273.

Belongs to the aldo/keto reductase family.

This is Aldo-keto reductase BQ2027_MB2996 from Mycobacterium bovis (strain ATCC BAA-935 / AF2122/97).